Here is a 350-residue protein sequence, read N- to C-terminus: Serine-threonine kinase receptor-associated protein (350 aa).

WD repeat units lie at residues 12–56 (GHTR…GTFL), 57–96 (GHKG…ELMT), 98–137 (AHKH…AEPK), 141–179 (GHTS…EVKS), 180–212 (LNFN…HSAV), 221–262 (EAPA…ESYK), and 263–302 (GHFG…TYGL). Phosphoserine occurs at positions 312, 335, and 338. The tract at residues 326-350 (AEEELEEIASENSDSIYSSTPEVKA) is disordered. A compositionally biased stretch (polar residues) spans 337-350 (NSDSIYSSTPEVKA). Y342 carries the phosphotyrosine modification.

Belongs to the WD repeat STRAP family. In terms of assembly, part of the core SMN complex that contains SMN1, GEMIN2/SIP1, DDX20/GEMIN3, GEMIN4, GEMIN5, GEMIN6, GEMIN7, GEMIN8 and STRAP/UNRIP. Part of the SMN-Sm complex that contains SMN1, GEMIN2/SIP1, DDX20/GEMIN3, GEMIN4, GEMIN5, GEMIN6, GEMIN7, GEMIN8, STRAP/UNRIP and the Sm proteins SNRPB, SNRPD1, SNRPD2, SNRPD3, SNRPE, SNRPF and SNRPG. Interacts directly with GEMIN6 and GEMIN7. Associates with the SMN complex in the cytoplasm but not in the nucleus. Also interacts with CSDE1/UNR and MAWBP. Interacts with PDPK1. Interacts with TRIM48.

It is found in the cytoplasm. The protein resides in the nucleus. Its function is as follows. The SMN complex catalyzes the assembly of small nuclear ribonucleoproteins (snRNPs), the building blocks of the spliceosome, and thereby plays an important role in the splicing of cellular pre-mRNAs. Most spliceosomal snRNPs contain a common set of Sm proteins SNRPB, SNRPD1, SNRPD2, SNRPD3, SNRPE, SNRPF and SNRPG that assemble in a heptameric protein ring on the Sm site of the small nuclear RNA to form the core snRNP (Sm core). In the cytosol, the Sm proteins SNRPD1, SNRPD2, SNRPE, SNRPF and SNRPG are trapped in an inactive 6S pICln-Sm complex by the chaperone CLNS1A that controls the assembly of the core snRNP. To assemble core snRNPs, the SMN complex accepts the trapped 5Sm proteins from CLNS1A forming an intermediate. Binding of snRNA inside 5Sm triggers eviction of the SMN complex, thereby allowing binding of SNRPD3 and SNRPB to complete assembly of the core snRNP. STRAP plays a role in the cellular distribution of the SMN complex. Negatively regulates TGF-beta signaling but positively regulates the PDPK1 kinase activity by enhancing its autophosphorylation and by significantly reducing the association of PDPK1 with 14-3-3 protein. In Rattus norvegicus (Rat), this protein is Serine-threonine kinase receptor-associated protein (Strap).